A 292-amino-acid polypeptide reads, in one-letter code: Phosphatidylglycerol--prolipoprotein diacylglyceryl transferase (292 aa).

The next 4 membrane-spanning stretches (helical) occupy residues 18-38, 67-87, 105-125, and 129-149; these read LFGA…GLLI, LLTW…VLFY, GGMS…AFCL, and ISIL…LFLG. Residue Arg150 participates in a 1,2-diacyl-sn-glycero-3-phospho-(1'-sn-glycerol) binding. A run of 3 helical transmembrane segments spans residues 193 to 213, 222 to 242, and 266 to 286; these read QLYE…ILIW, GAVT…VEFV, and GLTM…YFML.

This sequence belongs to the Lgt family.

It is found in the cell inner membrane. The enzyme catalyses L-cysteinyl-[prolipoprotein] + a 1,2-diacyl-sn-glycero-3-phospho-(1'-sn-glycerol) = an S-1,2-diacyl-sn-glyceryl-L-cysteinyl-[prolipoprotein] + sn-glycerol 1-phosphate + H(+). Its pathway is protein modification; lipoprotein biosynthesis (diacylglyceryl transfer). Functionally, catalyzes the transfer of the diacylglyceryl group from phosphatidylglycerol to the sulfhydryl group of the N-terminal cysteine of a prolipoprotein, the first step in the formation of mature lipoproteins. This Cereibacter sphaeroides (strain ATCC 17025 / ATH 2.4.3) (Rhodobacter sphaeroides) protein is Phosphatidylglycerol--prolipoprotein diacylglyceryl transferase.